A 492-amino-acid polypeptide reads, in one-letter code: E3 ubiquitin-protein ligase ARIH2 (492 aa).

The segment covering 1 to 11 (MSVDMNSQGSD) has biased composition (polar residues). The interval 1 to 37 (MSVDMNSQGSDSNEEDYDPNCEEEEEEEEDPGDIEDY) is disordered. The segment covering 12–36 (SNEEDYDPNCEEEEEEEEDPGDIED) has biased composition (acidic residues). The interval 64–111 (TYKESEGALHEHMTSLASVLKVSHSVAKLILVNFHWQVSEILDRYRSN) is UBA-like. Positions 134–343 (PPHHCAVCMQ…SEYYECSRYK (210 aa)) are TRIAD supradomain. 18 residues coordinate Zn(2+): Cys138, Cys141, Cys155, His157, Cys160, Cys163, Cys182, Cys187, Cys227, Cys232, Cys248, Cys251, Cys256, Cys259, His264, Cys269, Cys296, and Cys299. An RING-type 1 zinc finger spans residues 138–187 (CAVCMQFVRKENLLSLACQHQFCRSCWEQHCSVLVKDGVGVGISCMAQDC). The IBR-type zinc-finger motif lies at 207-269 (DKYRRYLFRD…RQMYHAPTDC (63 aa)). Residues 296–325 (CPKCNICIEKNGGCNHMQCSKCKHDFCWMC) form an RING-type 2; atypical zinc finger. Cys309 is a catalytic residue. Residues Cys314, Cys317, Cys322, Cys325, His332, and Cys339 each coordinate Zn(2+). Position 352 is a phosphoserine (Ser352). Positions 358 to 492 (REALKKYLFY…RTLLKDFHDT (135 aa)) are ariadne domain.

It belongs to the RBR family. Ariadne subfamily. As to quaternary structure, interacts (via RING-type zinc finger 1) with UBE2L3. Interacts (via RING-type zinc finger 2) with UBE2N. Interacts with neddylated CUL5. Interacts (via RING-type 2) with GFI1B. Interacts with GFI1; prevents its ubiquitination and proteasomal degradation. Interacts with DCUN1D1 (via UBA-like domain); promotes DCUN1D1 ubiquitination. Post-translationally, ubiquitinated. Ubiquitination promotes proteasomal degradation.

The protein resides in the nucleus. It is found in the cytoplasm. It carries out the reaction [E2 ubiquitin-conjugating enzyme]-S-ubiquitinyl-L-cysteine + [acceptor protein]-L-lysine = [E2 ubiquitin-conjugating enzyme]-L-cysteine + [acceptor protein]-N(6)-ubiquitinyl-L-lysine.. It functions in the pathway protein modification; protein ubiquitination. Autoinhibited by the ariadne domain, which masks the second RING-type zinc finger that contains the active site and inhibits the E3 activity. Inhibition is relieved upon binding to neddylated cullin-RING ubiquitin ligase complexes, which activate the E3 ligase activity of ARIH1. Its function is as follows. E3 ubiquitin-protein ligase, which catalyzes ubiquitination of target proteins together with ubiquitin-conjugating enzyme E2 UBE2L3. Acts as an atypical E3 ubiquitin-protein ligase by working together with cullin-5-RING ubiquitin ligase complex (ECS complex, also named CRL5 complex) and initiating ubiquitination of ECS substrates: associates with ECS complex and specifically mediates addition of the first ubiquitin on ECS targets. The initial ubiquitin is then elongated. E3 ubiquitin-protein ligase activity is activated upon binding to neddylated form of the ECS complex. Mediates 'Lys-6', 'Lys-48'- and 'Lys-63'-linked polyubiquitination. May play a role in myelopoiesis. The chain is E3 ubiquitin-protein ligase ARIH2 (Arih2) from Mus musculus (Mouse).